The chain runs to 115 residues: NADH-ubiquinone oxidoreductase chain 3 (115 aa).

Transmembrane regions (helical) follow at residues 3–23, 55–75, and 86–106; these read LYTV…VAFW, FFLV…LLPL, and TMMI…AYEW.

It belongs to the complex I subunit 3 family. In terms of assembly, core subunit of respiratory chain NADH dehydrogenase (Complex I) which is composed of 45 different subunits. Interacts with TMEM186. Interacts with TMEM242.

The protein localises to the mitochondrion inner membrane. It carries out the reaction a ubiquinone + NADH + 5 H(+)(in) = a ubiquinol + NAD(+) + 4 H(+)(out). Core subunit of the mitochondrial membrane respiratory chain NADH dehydrogenase (Complex I) which catalyzes electron transfer from NADH through the respiratory chain, using ubiquinone as an electron acceptor. Essential for the catalytic activity of complex I. This is NADH-ubiquinone oxidoreductase chain 3 from Mus musculus (Mouse).